We begin with the raw amino-acid sequence, 946 residues long: Leucine--tRNA ligase (946 aa).

A 'HIGH' region motif is present at residues 40 to 51 (PYPSGAGLHVGH). A 'KMSKS' region motif is present at residues 719–723 (KMSKS). Lys722 serves as a coordination point for ATP.

This sequence belongs to the class-I aminoacyl-tRNA synthetase family.

The protein resides in the cytoplasm. It carries out the reaction tRNA(Leu) + L-leucine + ATP = L-leucyl-tRNA(Leu) + AMP + diphosphate. This is Leucine--tRNA ligase from Parabacteroides distasonis (strain ATCC 8503 / DSM 20701 / CIP 104284 / JCM 5825 / NCTC 11152).